The chain runs to 81 residues: Photosystem I iron-sulfur center (81 aa).

4Fe-4S ferredoxin-type domains are found at residues 2–31 and 37–68; these read SHSVKIYDTCIGCTQCVRACPLDVLEMVPW and GQIASSPRTEDCVGCKRCETACPTDFLSIRVY. 8 residues coordinate [4Fe-4S] cluster: cysteine 11, cysteine 14, cysteine 17, cysteine 21, cysteine 48, cysteine 51, cysteine 54, and cysteine 58.

In terms of assembly, the cyanobacterial PSI reaction center is composed of one copy each of PsaA,B,C,D,E,F,I,J,K,L,M and X, and forms trimeric complexes. It depends on [4Fe-4S] cluster as a cofactor.

The protein localises to the cellular thylakoid membrane. It catalyses the reaction reduced [plastocyanin] + hnu + oxidized [2Fe-2S]-[ferredoxin] = oxidized [plastocyanin] + reduced [2Fe-2S]-[ferredoxin]. In terms of biological role, apoprotein for the two 4Fe-4S centers FA and FB of photosystem I (PSI); essential for photochemical activity. FB is the terminal electron acceptor of PSI, donating electrons to ferredoxin. The C-terminus interacts with PsaA/B/D and helps assemble the protein into the PSI complex. Required for binding of PsaD and PsaE to PSI. PSI is a plastocyanin/cytochrome c6-ferredoxin oxidoreductase, converting photonic excitation into a charge separation, which transfers an electron from the donor P700 chlorophyll pair to the spectroscopically characterized acceptors A0, A1, FX, FA and FB in turn. This Synechococcus sp. (strain RCC307) protein is Photosystem I iron-sulfur center.